Here is a 314-residue protein sequence, read N- to C-terminus: NAD-dependent protein lipoamidase sirtuin-4, mitochondrial (314 aa).

The N-terminal 28 residues, Met1 to Ser28, are a transit peptide targeting the mitochondrion. The 278-residue stretch at Pro37–Cys314 folds into the Deacetylase sirtuin-type domain. NAD(+)-binding positions include Gly62 to Tyr82 and Gln143 to Asp146. Residue His161 is the Proton acceptor of the active site. Residues Cys169, Cys172, Cys220, and Cys223 each contribute to the Zn(2+) site. NAD(+)-binding positions include Gly260–Ser262, Asn286–Gly288, and Cys304.

This sequence belongs to the sirtuin family. Class II subfamily. As to quaternary structure, interacts with GLUD1, IDE and SLC25A5. Interacts with DLAT and PDHX. Interacts with MCCC1 (via the biotin carboxylation domain). Interacts with PCCA and PC. Zn(2+) is required as a cofactor. As to expression, detected in vascular smooth muscle and striated muscle. Detected in insulin-producing beta-cells in pancreas islets of Langerhans (at protein level). Widely expressed. Weakly expressed in leukocytes and fetal thymus.

The protein resides in the mitochondrion matrix. It catalyses the reaction N(6)-[(R)-lipoyl]-L-lysyl-[protein] + NAD(+) + H2O = 2''-O-lipoyl-ADP-D-ribose + nicotinamide + L-lysyl-[protein]. The enzyme catalyses N(6)-biotinyl-L-lysyl-[protein] + NAD(+) + H2O = 2''-O-biotinyl-ADP-D-ribose + nicotinamide + L-lysyl-[protein]. It carries out the reaction N(6)-acetyl-L-lysyl-[protein] + NAD(+) + H2O = 2''-O-acetyl-ADP-D-ribose + nicotinamide + L-lysyl-[protein]. The catalysed reaction is L-cysteinyl-[protein] + NAD(+) = S-(ADP-D-ribosyl)-L-cysteinyl-[protein] + nicotinamide + H(+). Its function is as follows. Acts as a NAD-dependent protein lipoamidase, biotinylase, deacetylase and ADP-ribosyl transferase. Catalyzes more efficiently removal of lipoyl- and biotinyl- than acetyl-lysine modifications. Inhibits the pyruvate dehydrogenase complex (PDH) activity via the enzymatic hydrolysis of the lipoamide cofactor from the E2 component, DLAT, in a phosphorylation-independent manner. Catalyzes the transfer of ADP-ribosyl groups onto target proteins, including mitochondrial GLUD1, inhibiting GLUD1 enzyme activity. Acts as a negative regulator of mitochondrial glutamine metabolism by mediating mono ADP-ribosylation of GLUD1: expressed in response to DNA damage and negatively regulates anaplerosis by inhibiting GLUD1, leading to block metabolism of glutamine into tricarboxylic acid cycle and promoting cell cycle arrest. In response to mTORC1 signal, SIRT4 expression is repressed, promoting anaplerosis and cell proliferation. Acts as a tumor suppressor. Also acts as a NAD-dependent protein deacetylase: mediates deacetylation of 'Lys-471' of MLYCD, inhibiting its activity, thereby acting as a regulator of lipid homeostasis. Does not seem to deacetylate PC. Controls fatty acid oxidation by inhibiting PPARA transcriptional activation. Impairs SIRT1-PPARA interaction probably through the regulation of NAD(+) levels. Down-regulates insulin secretion. In Homo sapiens (Human), this protein is NAD-dependent protein lipoamidase sirtuin-4, mitochondrial.